The following is a 132-amino-acid chain: MYQAIPYNANRAWPAASRPATAAAAPPPPPPRGEEEEVRRAVAECPVVVVGRSGCCLSHVVKRLLQGLGVNPAVHEVAGEAELAGVVAGGGGVALPAVFVGGRLLGGLDRLMAVHISGELVPILKEAGALWL.

The disordered stretch occupies residues 16 to 38; it reads ASRPATAAAAPPPPPPRGEEEEV. The Glutaredoxin domain maps to 35–131; it reads EEEVRRAVAE…PILKEAGALW (97 aa). Cys55 serves as a coordination point for [2Fe-2S] cluster. Positions 129–132 match the Responsive for interaction with TGA factors motif; that stretch reads ALWL.

This sequence belongs to the glutaredoxin family. CC-type subfamily.

It localises to the cytoplasm. The protein localises to the nucleus. In terms of biological role, may only reduce GSH-thiol disulfides, but not protein disulfides. In Oryza sativa subsp. japonica (Rice), this protein is Monothiol glutaredoxin-S9 (GRXS9).